Consider the following 231-residue polypeptide: MRMMRAIKQGQWAILLWPYLLTTSIPLDCRDEQGGLSRCPSISQEKLLDRVIQHAELIYRVSEESCSLFEEMFIPFPLQLQRNQAGYPCITKALPIPSSKSEIQQISDKWLLHSVLMLVQSWIEPLVYLQTTLNRYDGVPDMLLNKTKWVSDKLMSLEQGVAVLIKKMLDEGLMTTTYSEQGLFQDDGQPEMLEYVMRDYTLLSCFKKDAHKMEILLKLLKCRQNDIHSCA.

The N-terminal stretch at 1–24 (MRMMRAIKQGQWAILLWPYLLTTS) is a signal peptide. Cystine bridges form between Cys29–Cys39, Cys89–Cys205, and Cys222–Cys230. N-linked (GlcNAc...) asparagine glycosylation is present at Asn145.

It belongs to the somatotropin/prolactin family. As to expression, pituitary gland.

It is found in the secreted. The chain is Somatolactin-2 from Sparus aurata (Gilthead sea bream).